The sequence spans 400 residues: Elongation factor Tu (400 aa).

The tr-type G domain occupies 10–210 (KPHCNVGTIG…VDSYIPIPPR (201 aa)). Positions 19-26 (GHVDHGKT) are G1. 19-26 (GHVDHGKT) contributes to the GTP binding site. T26 is a binding site for Mg(2+). The tract at residues 60 to 64 (GLTIA) is G2. A G3 region spans residues 81–84 (DCPG). Residues 81–85 (DCPGH) and 136–139 (NKCD) each bind GTP. The interval 136 to 139 (NKCD) is G4. The tract at residues 174–176 (SAI) is G5.

Belongs to the TRAFAC class translation factor GTPase superfamily. Classic translation factor GTPase family. EF-Tu/EF-1A subfamily. In terms of assembly, monomer.

Its subcellular location is the cytoplasm. The enzyme catalyses GTP + H2O = GDP + phosphate + H(+). In terms of biological role, GTP hydrolase that promotes the GTP-dependent binding of aminoacyl-tRNA to the A-site of ribosomes during protein biosynthesis. In Dehalococcoides mccartyi (strain ATCC BAA-2266 / KCTC 15142 / 195) (Dehalococcoides ethenogenes (strain 195)), this protein is Elongation factor Tu.